The chain runs to 1326 residues: Putative late blight resistance protein homolog R1B-19 (1326 aa).

Coiled coils occupy residues 421–444 (RYSD…ESLQ) and 536–558 (PRMK…KLLN). Residue 570–577 (GMPGLGKT) participates in ATP binding. Positions 611–864 (LLSLLCDTIG…KVKTCRLHDV (254 aa)) constitute an NB-ARC domain. Residues 749–770 (SEMEKEVECWEQVANNLGTRIH) adopt a coiled-coil conformation. LRR repeat units follow at residues 953 to 978 (FKFL…VYLK), 980 to 996 (FSAH…IYNL), 1027 to 1050 (LRHL…SAKL), 1053 to 1070 (LETL…LNFP), 1071 to 1094 (IRLE…ISAP), 1098 to 1118 (YLKL…ADHL), 1119 to 1146 (KNLE…MFPQ), 1167 to 1191 (FPNL…AMNI), and 1208 to 1230 (LIEK…AFKR). An HMA domain is found at 1209–1278 (IEKKTLKLNL…AWHARVVVPT (70 aa)).

It belongs to the disease resistance NB-LRR family.

The protein localises to the cytoplasm. The protein resides in the membrane. Confers resistance to late blight (Phytophthora infestans) races carrying the avirulence gene Avr1. Resistance proteins guard the plant against pathogens that contain an appropriate avirulence protein via an indirect interaction with this avirulence protein. That triggers a defense system including the hypersensitive response, which restricts the pathogen growth. The sequence is that of Putative late blight resistance protein homolog R1B-19 (R1B-19) from Solanum demissum (Wild potato).